A 217-amino-acid chain; its full sequence is Deoxyribose-phosphate aldolase 1 (217 aa).

The active-site Proton donor/acceptor is the Asp89. The Schiff-base intermediate with acetaldehyde role is filled by Lys151. Lys180 (proton donor/acceptor) is an active-site residue.

Belongs to the DeoC/FbaB aldolase family. DeoC type 1 subfamily.

It is found in the cytoplasm. The catalysed reaction is 2-deoxy-D-ribose 5-phosphate = D-glyceraldehyde 3-phosphate + acetaldehyde. It participates in carbohydrate degradation; 2-deoxy-D-ribose 1-phosphate degradation; D-glyceraldehyde 3-phosphate and acetaldehyde from 2-deoxy-alpha-D-ribose 1-phosphate: step 2/2. Its function is as follows. Catalyzes a reversible aldol reaction between acetaldehyde and D-glyceraldehyde 3-phosphate to generate 2-deoxy-D-ribose 5-phosphate. The protein is Deoxyribose-phosphate aldolase 1 of Cutibacterium acnes (strain DSM 16379 / KPA171202) (Propionibacterium acnes).